The sequence spans 379 residues: Probable pectin lyase B (379 aa).

An N-terminal signal peptide occupies residues 1 to 20; that stretch reads MHYKLLFAAAAASLASAVSA. Cystine bridges form between cysteine 83–cysteine 102 and cysteine 92–cysteine 226. N-linked (GlcNAc...) asparagine glycans are attached at residues asparagine 129 and asparagine 252. Residue arginine 256 is part of the active site. A disulfide bridge links cysteine 323 with cysteine 331.

The protein belongs to the polysaccharide lyase 1 family.

Its subcellular location is the secreted. The catalysed reaction is Eliminative cleavage of (1-&gt;4)-alpha-D-galacturonan methyl ester to give oligosaccharides with 4-deoxy-6-O-methyl-alpha-D-galact-4-enuronosyl groups at their non-reducing ends.. Its function is as follows. Pectinolytic enzymes consist of four classes of enzymes: pectin lyase, polygalacturonase, pectin methylesterase and rhamnogalacturonase. Among pectinolytic enzymes, pectin lyase is the most important in depolymerization of pectin, since it cleaves internal glycosidic bonds of highly methylated pectins. This chain is Probable pectin lyase B (pelB), found in Aspergillus niger (strain ATCC MYA-4892 / CBS 513.88 / FGSC A1513).